We begin with the raw amino-acid sequence, 226 residues long: MNENLFTSFITPMMLGLPLVTLIILFPSLLFPSSNRLINNRLVSLQQWALQLMSKQMMSIHNTKGQTWTLMLMSLILFIGSTNLLGLLPHSFTPTTQLSMNLGMAIPLWAGAVITGFRNKTKASLAHFYPQGTPTPLIPMLVIIETISLFIQPMALAVRLTANITAGHLLIHLIGGATLALTSISPTTALITFIILILLTILEFELGTREAYVFTLLVSLYLHDNT.

The next 5 helical transmembrane spans lie at 9 to 29, 68 to 88, 97 to 117, 138 to 158, and 184 to 204; these read FITP…FPSL, WTLM…LGLL, QLSM…ITGF, IPML…ALAV, and ISPT…ILEF.

This sequence belongs to the ATPase A chain family. In terms of assembly, component of the ATP synthase complex composed at least of ATP5F1A/subunit alpha, ATP5F1B/subunit beta, ATP5MC1/subunit c (homooctomer), MT-ATP6/subunit a, MT-ATP8/subunit 8, ATP5ME/subunit e, ATP5MF/subunit f, ATP5MG/subunit g, ATP5MK/subunit k, ATP5MJ/subunit j, ATP5F1C/subunit gamma, ATP5F1D/subunit delta, ATP5F1E/subunit epsilon, ATP5PF/subunit F6, ATP5PB/subunit b, ATP5PD/subunit d, ATP5PO/subunit OSCP. ATP synthase complex consists of a soluble F(1) head domain (subunits alpha(3) and beta(3)) - the catalytic core - and a membrane F(0) domain - the membrane proton channel (subunits c, a, 8, e, f, g, k and j). These two domains are linked by a central stalk (subunits gamma, delta, and epsilon) rotating inside the F1 region and a stationary peripheral stalk (subunits F6, b, d, and OSCP). Interacts with DNAJC30; interaction is direct.

The protein resides in the mitochondrion inner membrane. The catalysed reaction is H(+)(in) = H(+)(out). Its function is as follows. Subunit a, of the mitochondrial membrane ATP synthase complex (F(1)F(0) ATP synthase or Complex V) that produces ATP from ADP in the presence of a proton gradient across the membrane which is generated by electron transport complexes of the respiratory chain. ATP synthase complex consist of a soluble F(1) head domain - the catalytic core - and a membrane F(1) domain - the membrane proton channel. These two domains are linked by a central stalk rotating inside the F(1) region and a stationary peripheral stalk. During catalysis, ATP synthesis in the catalytic domain of F(1) is coupled via a rotary mechanism of the central stalk subunits to proton translocation. With the subunit c (ATP5MC1), forms the proton-conducting channel in the F(0) domain, that contains two crucial half-channels (inlet and outlet) that facilitate proton movement from the mitochondrial intermembrane space (IMS) into the matrix. Protons are taken up via the inlet half-channel and released through the outlet half-channel, following a Grotthuss mechanism. In Capra hircus (Goat), this protein is ATP synthase F(0) complex subunit a.